We begin with the raw amino-acid sequence, 659 residues long: Exoribonuclease 2 (659 aa).

One can recognise an RNB domain in the interval arginine 189–alanine 531. Residues asparagine 576 to leucine 658 enclose the S1 motif domain.

Belongs to the RNR ribonuclease family. RNase II subfamily.

The protein resides in the cytoplasm. The catalysed reaction is Exonucleolytic cleavage in the 3'- to 5'-direction to yield nucleoside 5'-phosphates.. Its function is as follows. Involved in mRNA degradation. Hydrolyzes single-stranded polyribonucleotides processively in the 3' to 5' direction. This is Exoribonuclease 2 from Haemophilus influenzae (strain 86-028NP).